A 481-amino-acid chain; its full sequence is Cytochrome c oxidase subunit 1 (481 aa).

The chain crosses the membrane as a helical span at residues 22–42 (ISYLWLAYWFGMIGFYMSVLI). Ca(2+)-binding residues include glutamate 45 and glycine 50. The next 8 helical transmembrane spans lie at 64–84 (LLFTLHGLIMVFFNIMTGLFG), 109–129 (SLLFQPIGFVLVVSSIYLEIG), 151–171 (FIIFGLLAAGIASTLSSVNFI), 194–214 (IVLTSFLLLLSLPVVTAVFLM), 240–260 (LFWFFGHPEVYIMILPGFGII), 278–298 (MILAMGFNSFVRLFGLGTSYV), 309–329 (YFTTVTILIALPTGNKIFNWV), and 343–363 (LVLFTVLFIVNFVIGGTTGVV). Histidine 69 lines the Fe(II)-heme a pocket. Histidine 246 is a binding site for Cu cation. The segment at residues 246-250 (HPEVY) is a cross-link (1'-histidyl-3'-tyrosine (His-Tyr)). Tyrosine 250 is a binding site for O2. Residues histidine 374 and aspartate 375 each coordinate Mg(2+). Histidine 382 contributes to the heme a3 binding site. Helical transmembrane passes span 382 to 402 (HFHFVLSIGAIISMICFIIYI) and 420 to 440 (IAPIFMISVLLTFLPMHFTGF). Histidine 384 contributes to the Fe(II)-heme a binding site. A Ca(2+)-binding site is contributed by proline 448. Residues 459–479 (FICTLGATMMLVLKLAILFII) traverse the membrane as a helical segment.

It belongs to the heme-copper respiratory oxidase family. Component of the cytochrome c oxidase (complex IV, CIV), a multisubunit enzyme composed of a catalytic core of 3 subunits and several supernumerary subunits. The complex exists as a monomer or a dimer and forms supercomplexes (SCs) in the inner mitochondrial membrane with ubiquinol-cytochrome c oxidoreductase (cytochrome b-c1 complex, complex III, CIII). It depends on heme as a cofactor. Cu cation is required as a cofactor.

The protein resides in the mitochondrion inner membrane. It catalyses the reaction 4 Fe(II)-[cytochrome c] + O2 + 8 H(+)(in) = 4 Fe(III)-[cytochrome c] + 2 H2O + 4 H(+)(out). It participates in energy metabolism; oxidative phosphorylation. Functionally, component of the cytochrome c oxidase, the last enzyme in the mitochondrial electron transport chain which drives oxidative phosphorylation. The respiratory chain contains 3 multisubunit complexes succinate dehydrogenase (complex II, CII), ubiquinol-cytochrome c oxidoreductase (cytochrome b-c1 complex, complex III, CIII) and cytochrome c oxidase (complex IV, CIV), that cooperate to transfer electrons derived from NADH and succinate to molecular oxygen, creating an electrochemical gradient over the inner membrane that drives transmembrane transport and the ATP synthase. Cytochrome c oxidase is the component of the respiratory chain that catalyzes the reduction of oxygen to water. Electrons originating from reduced cytochrome c in the intermembrane space (IMS) are transferred via the dinuclear copper A center (CU(A)) of subunit 2 and heme A of subunit 1 to the active site in subunit 1, a binuclear center (BNC) formed by heme A3 and copper B (CU(B)). The BNC reduces molecular oxygen to 2 water molecules using 4 electrons from cytochrome c in the IMS and 4 protons from the mitochondrial matrix. This chain is Cytochrome c oxidase subunit 1 (MT-CO1), found in Theileria parva (East coast fever infection agent).